Reading from the N-terminus, the 276-residue chain is MAVVTMRELLDAGVHFGHQTRRWNPKMRRFIFTERNGIYIIDLQQTLTYIDQAFEFVKETVAHGGTILFVGTKKQAQEAVQVEAERVGMPYVNHRWLGGMLTNFQTVSKRLHRMKELQAMDAAEDGYEGRTKRETLMLTRERVKLERVLSGIADMSRIPSALWIIDTNKEHIAVAEAHKLNIPVVAILDTNCDPDVVDYPVPGNDDAIRATALLSRVISTAVEEGKKAREERQLAAAREAAGEPKSEDAPAEAAATEEAPATEAPAAEAQQENAAE.

The tract at residues 226–276 is disordered; that stretch reads KKAREERQLAAAREAAGEPKSEDAPAEAAATEEAPATEAPAAEAQQENAAE. Residues 251–276 are compositionally biased toward low complexity; that stretch reads AEAAATEEAPATEAPAAEAQQENAAE.

This sequence belongs to the universal ribosomal protein uS2 family.

This chain is Small ribosomal subunit protein uS2, found in Corynebacterium efficiens (strain DSM 44549 / YS-314 / AJ 12310 / JCM 11189 / NBRC 100395).